Here is a 251-residue protein sequence, read N- to C-terminus: MHILLANDDGYLAPGLAALHRALAPLGRITVVAPEQNHSGASNSLTLQRPLSVFQATEGAQKGFRFVNGTPTDCVHIALTGMIEERPDLVVSGINQGQNMGEDVLYSGTVAAAIEGYLFGVPSIAFSQVDKGWTHLDAAERIAREVVERYLSDPPAGPVLLNVNIPNLPYAEVAGWRATRLGKRHQSQPVIRQENPRGEPIYWVGAAGDAKDASEGTDFHAVAHGFVSLTPLQLDLTDTAQLRSVRRWQTP.

Aspartate 8, aspartate 9, serine 39, and asparagine 95 together coordinate a divalent metal cation.

This sequence belongs to the SurE nucleotidase family. The cofactor is a divalent metal cation.

The protein localises to the cytoplasm. The enzyme catalyses a ribonucleoside 5'-phosphate + H2O = a ribonucleoside + phosphate. Functionally, nucleotidase that shows phosphatase activity on nucleoside 5'-monophosphates. In Ralstonia nicotianae (strain ATCC BAA-1114 / GMI1000) (Ralstonia solanacearum), this protein is 5'-nucleotidase SurE.